The following is a 536-amino-acid chain: Protoporphyrinogen oxidase, chloroplastic (536 aa).

The transit peptide at Met-1–Arg-36 directs the protein to the chloroplast. FAD contacts are provided by residues Gly-62 to Gly-67, Glu-87 to Ala-88, and Gly-111 to Ser-114. The segment at Thr-248–Gly-272 is disordered. Over residues Ile-252–Arg-266 the composition is skewed to basic and acidic residues. Val-510–Leu-512 contributes to the FAD binding site.

Belongs to the protoporphyrinogen/coproporphyrinogen oxidase family. Protoporphyrinogen oxidase subfamily. It depends on FAD as a cofactor.

It is found in the plastid. The protein localises to the chloroplast. The catalysed reaction is protoporphyrinogen IX + 3 O2 = protoporphyrin IX + 3 H2O2. The protein operates within porphyrin-containing compound metabolism; protoporphyrin-IX biosynthesis; protoporphyrin-IX from protoporphyrinogen-IX: step 1/1. Its pathway is porphyrin-containing compound metabolism; chlorophyll biosynthesis. In terms of biological role, catalyzes the 6-electron oxidation of protoporphyrinogen-IX to form protoporphyrin-IX. The polypeptide is Protoporphyrinogen oxidase, chloroplastic (PPOX1) (Oryza sativa subsp. japonica (Rice)).